Consider the following 522-residue polypeptide: DNA primase DnaG (522 aa).

One can recognise a Toprim domain in the interval 171–257 (DAIIILEGRA…CVEDLVQKEI (87 aa)). 3 residues coordinate Mg(2+): Glu177, Asp219, and Asp221.

The protein belongs to the archaeal DnaG primase family. Forms a ternary complex with MCM helicase and DNA. Component of the archaeal exosome complex. Requires Mg(2+) as cofactor.

It carries out the reaction ssDNA + n NTP = ssDNA/pppN(pN)n-1 hybrid + (n-1) diphosphate.. In terms of biological role, RNA polymerase that catalyzes the synthesis of short RNA molecules used as primers for DNA polymerase during DNA replication. Also part of the exosome, which is a complex involved in RNA degradation. Acts as a poly(A)-binding protein that enhances the interaction between heteromeric, adenine-rich transcripts and the exosome. The sequence is that of DNA primase DnaG from Methanosarcina mazei (strain ATCC BAA-159 / DSM 3647 / Goe1 / Go1 / JCM 11833 / OCM 88) (Methanosarcina frisia).